A 381-amino-acid chain; its full sequence is 4-hydroxy-3-methylbut-2-en-1-yl diphosphate synthase (flavodoxin) (381 aa).

Residues Cys273, Cys276, Cys308, and Glu315 each contribute to the [4Fe-4S] cluster site.

Belongs to the IspG family. The cofactor is [4Fe-4S] cluster.

It carries out the reaction (2E)-4-hydroxy-3-methylbut-2-enyl diphosphate + oxidized [flavodoxin] + H2O + 2 H(+) = 2-C-methyl-D-erythritol 2,4-cyclic diphosphate + reduced [flavodoxin]. Its pathway is isoprenoid biosynthesis; isopentenyl diphosphate biosynthesis via DXP pathway; isopentenyl diphosphate from 1-deoxy-D-xylulose 5-phosphate: step 5/6. Converts 2C-methyl-D-erythritol 2,4-cyclodiphosphate (ME-2,4cPP) into 1-hydroxy-2-methyl-2-(E)-butenyl 4-diphosphate. The chain is 4-hydroxy-3-methylbut-2-en-1-yl diphosphate synthase (flavodoxin) from Gluconobacter oxydans (strain 621H) (Gluconobacter suboxydans).